The primary structure comprises 647 residues: Putative lipase YDL109C (647 aa).

The active-site Charge relay system is serine 274. Positions 502–523 (PPPSPTLYEGTAAKEGETRKTR) are disordered. Positions 513–523 (AAKEGETRKTR) are enriched in basic and acidic residues.

This sequence belongs to the putative lipase ROG1 family.

Functionally, involved in lipid metabolism. In Saccharomyces cerevisiae (strain ATCC 204508 / S288c) (Baker's yeast), this protein is Putative lipase YDL109C.